The primary structure comprises 201 residues: Myosin regulatory light chain 2 (201 aa).

The disordered stretch occupies residues 1 to 48; the sequence is MADKDKKVKKKKAKEDAPAEEAPAAAAPAGDRQSSRGSRKAKRTGSNV. A compositionally biased stretch (low complexity) spans 20–29; the sequence is EEAPAAAAPA. Ser46 bears the Phosphoserine mark. EF-hand domains are found at residues 55–90, 125–158, and 159–194; these read KQVA…LGRL, DEDD…WGDK, and FSAD…SAEE. Ca(2+) is bound by residues Asp68, Asp70, Asp72, and Asp79.

In terms of assembly, myosin is a hexamer of 2 heavy chains and 4 light chains.

The protein is Myosin regulatory light chain 2 of Bombyx mori (Silk moth).